The following is a 906-amino-acid chain: Eukaryotic translation initiation factor 3 subunit C (906 aa).

The disordered stretch occupies residues 1-22 (MSRFFANGSDSESESSEEEVQA). A compositionally biased stretch (acidic residues) spans 11–20 (SESESSEEEV). Residues S34, S165, S176, and S185 each carry the phosphoserine modification. Residues 158–283 (REAPDQESEA…KRPEDDEDGE (126 aa)) form a disordered region. Positions 162–186 (DQESEAEDEEAAQDSDGGDAGDDSD) are enriched in acidic residues. Positions 195–209 (EAAPKVAKTVPAKAA) are enriched in low complexity. Acidic residues predominate over residues 211-237 (ADDDDSDDSIDWDSDSETETESSDDEN). Basic and acidic residues predominate over residues 242-270 (MRERFLKRTTEKEEKDDDKRKDKRKEQKI). The PCI domain maps to 641-817 (FHMHINLELL…ETVVMHRSEP (177 aa)). Disordered stretches follow at residues 853–873 (GNMG…NWGG) and 887–906 (QRGR…IDEE). The segment covering 894–906 (QQQQQQVQTIDEE) has biased composition (low complexity).

Belongs to the eIF-3 subunit C family. Component of the eukaryotic translation initiation factor 3 (eIF-3) complex. The eIF-3 complex interacts with pix.

The protein resides in the cytoplasm. Component of the eukaryotic translation initiation factor 3 (eIF-3) complex, which is involved in protein synthesis of a specialized repertoire of mRNAs and, together with other initiation factors, stimulates binding of mRNA and methionyl-tRNAi to the 40S ribosome. The eIF-3 complex specifically targets and initiates translation of a subset of mRNAs involved in cell proliferation. The sequence is that of Eukaryotic translation initiation factor 3 subunit C from Drosophila ananassae (Fruit fly).